The primary structure comprises 60 residues: Cytotoxin 4 (60 aa).

Intrachain disulfides connect C3–C21, C14–C38, C42–C53, and C54–C59.

The protein belongs to the three-finger toxin family. Short-chain subfamily. Type IA cytotoxin sub-subfamily. In terms of assembly, monomer in solution; Homodimer and oligomer in the presence of negatively charged lipids forming a pore with a size ranging between 20 and 30 Angstroms. In terms of tissue distribution, expressed by the venom gland.

The protein resides in the secreted. It is found in the target cell membrane. Functionally, shows cytolytic activity on many different cells by forming pore in lipid membranes. In vivo, increases heart rate or kills the animal by cardiac arrest. In addition, it binds to heparin with high affinity, interacts with Kv channel-interacting protein 1 (KCNIP1) in a calcium-independent manner, and binds to integrin alpha-V/beta-3 (ITGAV/ITGB3) with moderate affinity. The sequence is that of Cytotoxin 4 from Naja mossambica (Mozambique spitting cobra).